The chain runs to 254 residues: Winged helix repair factor 1 (254 aa).

Residues 4–21 (KRRLLASEAFGVKRRRAP) carry the Bipartite nuclear localization signal motif. Winged helix domain stretches follow at residues 32 to 104 (RAGS…GIVF), 120 to 179 (PCAG…LAVP), and 180 to 254 (GAGR…LPDT).

The protein belongs to the STK19 family. In terms of assembly, monomer in solution. Homodimer; when bound to DNA. Component of a transcription-coupled nucleotide excision repair (TC-NER) complex composed of STK19, ERCC6, ERCC8, DDA1, DDB1, ELOF1 and UVSSA which assembles and interacts with the multiprotein RNA polymerase II complex when it stalls at DNA lesions.

It localises to the nucleus. Its function is as follows. DNA-binding protein which is required for efficient transcription-coupled nucleotide excision repair (TC-NER). Acts as part of a TC-NER complex which assembles and interacts with RNA polymerase II (RNAPII) when it stalls at DNA lesions. TC-NER complex subunit UVSSA binds to the GTF2H1/p62 subunit of the TFIIH transcription factor complex, tethering TFIIH to the TC-NER complex. WHR1/STK19 then interacts with the XPD helicase subunit of TFIIH which guides TFIIH to DNA downstream of the stalled RNAPII, ensuring DNA repair. Directly interacts with RNAPII and also binds to downstream DNA. Promotes the timely removal of DNA damage-stalled RNAPII, allowing downstream NER factors to access DNA lesions. Required for monoubiquitination of UVSSA. Regulates repositioning and stabilization of UVSSA within the TC-NER complex. Stimulates ubiquitination of RNAPII complex member RBP1. Also binds to RNA and regulates the expression levels of many mRNAs. This chain is Winged helix repair factor 1, found in Mus musculus (Mouse).